A 58-amino-acid polypeptide reads, in one-letter code: UPF0509 protein YciZ (58 aa).

The protein belongs to the UPF0509 family.

In Escherichia fergusonii (strain ATCC 35469 / DSM 13698 / CCUG 18766 / IAM 14443 / JCM 21226 / LMG 7866 / NBRC 102419 / NCTC 12128 / CDC 0568-73), this protein is UPF0509 protein YciZ.